A 54-amino-acid polypeptide reads, in one-letter code: uncharacterized protein (54 aa).

2 stretches are compositionally biased toward basic and acidic residues: residues 1-19 and 26-54; these read MTEK…HNDL and EELK…YDTK. The interval 1–54 is disordered; sequence MTEKKQQNKPNENPEHNDLTDPIPNEELKENMNDEKHKRQQRDNSQSERDYDTK.

This is an uncharacterized protein from Bacillus subtilis (strain 168).